The sequence spans 164 residues: UPF0303 protein Smed_2872 (164 aa).

The protein belongs to the UPF0303 family.

This chain is UPF0303 protein Smed_2872, found in Sinorhizobium medicae (strain WSM419) (Ensifer medicae).